A 485-amino-acid polypeptide reads, in one-letter code: Sphingosine kinase 1 (485 aa).

One can recognise a DAGKc domain in the interval 116-258 (GRPKKLLVFV…LDVATISQGT (143 aa)). Residues 126 to 128 (NPF) and T158 contribute to the ATP site. 183 to 186 (SGDG) provides a ligand contact to substrate. D185 functions as the Proton donor/acceptor in the catalytic mechanism. Residues E190 and 215 to 217 (GSG) contribute to the ATP site. A substrate-binding site is contributed by D276. Residues R283, R289, and 446–448 (DGE) contribute to the ATP site.

Mg(2+) serves as cofactor. Highly expressed in stems and flowers and at lower levels in roots, leaves and siliques.

Its subcellular location is the vacuole membrane. The enzyme catalyses a sphingoid base + ATP = a sphingoid 1-phosphate + ADP + H(+). Activated by phosphatidic acid (PA). Binding with PA stimulates the activity by promoting the binding of substrate to the catalytic site. In terms of biological role, involved in the production of sphingolipid metabolites. Phosphorylates sphingosine and various sphingoid long-chain base (LCB) products, such as phytosphingosine (PHS, 4-hydroxysphinganine), 4-hydroxy-8-sphingenine, 4,8-sphingadienine, D-erythro-dihydrosphingosine and D,L-threo-dihydrosphingosine. Is required for abscisic acid (ABA) signaling that mediates stomatal closure, inhibition of seed germination and root elongation. May function upstream of PLDALPHA1 and phosphatidic acid (PA) in an amplification response to ABA that mediates stomatal closure. In Arabidopsis thaliana (Mouse-ear cress), this protein is Sphingosine kinase 1 (SPHK1).